The chain runs to 234 residues: MEVSSIGSFQEHIDKTTDIVTLHPLLRNPIMPQPRGIYLITPDETDTARLIAHTAPLLNGIVWLQYRNKLANTALRTEQAQALLALCRPTGIPLLINDDLELAQTIGADGVHLGMHDSNASIARAQLGPHAIIGVSCYNQIERAKQAIKAGASYVGFGAFYPSHTKTTPYRATPELLRQTTHLGVPRVAIGGLTPKNIAPIIEAGAELLAVISGIYSAKNPITALKAYQSQFNI.

4-amino-2-methyl-5-(diphosphooxymethyl)pyrimidine-binding positions include 65–69 (QYRNK) and Asn-97. Mg(2+) contacts are provided by Asp-98 and Asp-117. Ser-136 provides a ligand contact to 4-amino-2-methyl-5-(diphosphooxymethyl)pyrimidine. 163 to 165 (SHT) contributes to the 2-[(2R,5Z)-2-carboxy-4-methylthiazol-5(2H)-ylidene]ethyl phosphate binding site. Lys-166 is a 4-amino-2-methyl-5-(diphosphooxymethyl)pyrimidine binding site. 2-[(2R,5Z)-2-carboxy-4-methylthiazol-5(2H)-ylidene]ethyl phosphate is bound by residues Gly-192 and 212-213 (IS).

The protein belongs to the thiamine-phosphate synthase family. Mg(2+) serves as cofactor.

It carries out the reaction 2-[(2R,5Z)-2-carboxy-4-methylthiazol-5(2H)-ylidene]ethyl phosphate + 4-amino-2-methyl-5-(diphosphooxymethyl)pyrimidine + 2 H(+) = thiamine phosphate + CO2 + diphosphate. It catalyses the reaction 2-(2-carboxy-4-methylthiazol-5-yl)ethyl phosphate + 4-amino-2-methyl-5-(diphosphooxymethyl)pyrimidine + 2 H(+) = thiamine phosphate + CO2 + diphosphate. The enzyme catalyses 4-methyl-5-(2-phosphooxyethyl)-thiazole + 4-amino-2-methyl-5-(diphosphooxymethyl)pyrimidine + H(+) = thiamine phosphate + diphosphate. The protein operates within cofactor biosynthesis; thiamine diphosphate biosynthesis; thiamine phosphate from 4-amino-2-methyl-5-diphosphomethylpyrimidine and 4-methyl-5-(2-phosphoethyl)-thiazole: step 1/1. Its function is as follows. Condenses 4-methyl-5-(beta-hydroxyethyl)thiazole monophosphate (THZ-P) and 2-methyl-4-amino-5-hydroxymethyl pyrimidine pyrophosphate (HMP-PP) to form thiamine monophosphate (TMP). The sequence is that of Thiamine-phosphate synthase from Xylella fastidiosa (strain Temecula1 / ATCC 700964).